The following is a 333-amino-acid chain: Mitochondrial thiamine pyrophosphate carrier 1 (333 aa).

Solcar repeat units lie at residues G12–F115, P129–R215, and P222–L318. Transmembrane regions (helical) follow at residues V17–L35, L96–I112, F135–L155, G190–Y209, L221–A238, and G293–W310.

Belongs to the mitochondrial carrier (TC 2.A.29) family.

Its subcellular location is the mitochondrion inner membrane. Mitochondrial transporter that mediates uptake of thiamine pyrophosphate (ThPP) into mitochondria. This chain is Mitochondrial thiamine pyrophosphate carrier 1 (tpc-1), found in Neurospora crassa (strain ATCC 24698 / 74-OR23-1A / CBS 708.71 / DSM 1257 / FGSC 987).